The primary structure comprises 225 residues: NAD(P)H-quinone oxidoreductase subunit K, chloroplastic (225 aa).

[4Fe-4S] cluster-binding residues include Cys43, Cys44, Cys108, and Cys139.

It belongs to the complex I 20 kDa subunit family. In terms of assembly, NDH is composed of at least 16 different subunits, 5 of which are encoded in the nucleus. The cofactor is [4Fe-4S] cluster.

The protein localises to the plastid. It localises to the chloroplast thylakoid membrane. It catalyses the reaction a plastoquinone + NADH + (n+1) H(+)(in) = a plastoquinol + NAD(+) + n H(+)(out). It carries out the reaction a plastoquinone + NADPH + (n+1) H(+)(in) = a plastoquinol + NADP(+) + n H(+)(out). NDH shuttles electrons from NAD(P)H:plastoquinone, via FMN and iron-sulfur (Fe-S) centers, to quinones in the photosynthetic chain and possibly in a chloroplast respiratory chain. The immediate electron acceptor for the enzyme in this species is believed to be plastoquinone. Couples the redox reaction to proton translocation, and thus conserves the redox energy in a proton gradient. This is NAD(P)H-quinone oxidoreductase subunit K, chloroplastic from Amborella trichopoda.